The chain runs to 205 residues: Ribosomal RNA small subunit methyltransferase G (205 aa).

S-adenosyl-L-methionine-binding positions include Gly-73, Leu-78, Val-124–Glu-125, and Arg-139.

This sequence belongs to the methyltransferase superfamily. RNA methyltransferase RsmG family.

It localises to the cytoplasm. The catalysed reaction is guanosine(527) in 16S rRNA + S-adenosyl-L-methionine = N(7)-methylguanosine(527) in 16S rRNA + S-adenosyl-L-homocysteine. Functionally, specifically methylates the N7 position of guanine in position 527 of 16S rRNA. This is Ribosomal RNA small subunit methyltransferase G from Methylobacillus flagellatus (strain ATCC 51484 / DSM 6875 / VKM B-1610 / KT).